The primary structure comprises 102 residues: Protamine-2 (102 aa).

The interval 1–102 (MVRCRVRSPS…RTRRRTCRRH (102 aa)) is disordered. Residues Ser-8, Ser-10, and Ser-37 each carry the phosphoserine modification. Over residues 8 to 17 (SPSERSHEVY) the composition is skewed to basic and acidic residues. The span at 39–48 (EHVEVYERTH) shows a compositional bias: basic and acidic residues. The span at 49–102 (GHSHYRRRHCSRRRLRRIHRQQHRSCRRRKRRSCRHRRRHRKGCRTRRRTCRRH) shows a compositional bias: basic residues.

This sequence belongs to the protamine P2 family. As to quaternary structure, interacts with TDRP. Proteolytic processing into mature chains is required for histone eviction during spermatogenesis. Transition proteins (TNP1 and TNP2) are required for processing. As to expression, testis.

It is found in the nucleus. It localises to the chromosome. Functionally, protamines substitute for histones in the chromatin of sperm during the haploid phase of spermatogenesis. They compact sperm DNA into a highly condensed, stable and inactive complex. This Gorilla gorilla gorilla (Western lowland gorilla) protein is Protamine-2 (PRM2).